A 285-amino-acid chain; its full sequence is Probable endonuclease 4 (285 aa).

H69, H109, E145, D179, H182, H216, D229, H231, and E261 together coordinate Zn(2+).

Belongs to the AP endonuclease 2 family. Requires Zn(2+) as cofactor.

The catalysed reaction is Endonucleolytic cleavage to 5'-phosphooligonucleotide end-products.. Functionally, endonuclease IV plays a role in DNA repair. It cleaves phosphodiester bonds at apurinic or apyrimidinic (AP) sites, generating a 3'-hydroxyl group and a 5'-terminal sugar phosphate. This chain is Probable endonuclease 4, found in Enterobacter sp. (strain 638).